Reading from the N-terminus, the 234-residue chain is Sugar fermentation stimulation protein A (234 aa).

The H-T-H motif DNA-binding region spans 201–220; it reads LLSEAQQRGVEILAYKAELS.

This sequence belongs to the SfsA family.

Its function is as follows. Binds to DNA non-specifically. Could be a regulatory factor involved in maltose metabolism. This Escherichia coli O7:K1 (strain IAI39 / ExPEC) protein is Sugar fermentation stimulation protein A.